A 122-amino-acid polypeptide reads, in one-letter code: Glucagon-2 (122 aa).

Positions 1 to 21 (MTSLHSLAGLLLLMIIQSSWQ) are cleaved as a signal peptide. 2 propeptides span residues 83–86 (NGLF) and glutamate 122.

The protein belongs to the glucagon family.

The protein resides in the secreted. Its function is as follows. Promotes hydrolysis of glycogen and lipids, and raises the blood sugar level. This Lophius americanus (American angler) protein is Glucagon-2 (gcg2).